Reading from the N-terminus, the 195-residue chain is Large ribosomal subunit protein uL18 (195 aa).

The protein belongs to the universal ribosomal protein uL18 family. In terms of assembly, part of the 50S ribosomal subunit. Contacts the 5S and 23S rRNAs.

Functionally, this is one of the proteins that bind and probably mediate the attachment of the 5S RNA into the large ribosomal subunit, where it forms part of the central protuberance. This Methanococcus vannielii protein is Large ribosomal subunit protein uL18.